We begin with the raw amino-acid sequence, 453 residues long: uncharacterized protein (453 aa).

One can recognise a YrdC-like domain in the interval 276 to 437 (IAQTKQIKAL…TKQIVRGSST (162 aa)).

This is an uncharacterized protein from Mycoplasma pneumoniae (strain ATCC 29342 / M129 / Subtype 1) (Mycoplasmoides pneumoniae).